The primary structure comprises 422 residues: Protein phosphatase 1 regulatory subunit 36 (422 aa).

As to quaternary structure, interacts with PPP1CA.

Inhibits phosphatase activity of protein phosphatase 1 (PP1) complexes. The chain is Protein phosphatase 1 regulatory subunit 36 (PPP1R36) from Homo sapiens (Human).